The primary structure comprises 246 residues: MVGDYRGRFSSRRFSDDSDDSSDDASSVEGETTSSMYSAGKEYMETEWTNEKHSLYLKSMEASFVDQLYNSLGALGKNENVSESTRFGSGRKPSQEQFKVLHDGFWQKINVKQPEHRINGRHGGNSHEFLRSPWIKHYKPLVKTQIPVTDEPENQVVSSSNGKKGICSSGSASSLKQLSSHSRDHDQISVGEAEVSDQNFVNEGIKGENGSSKKMKTVMMSESSSTDQVVPLNKLLQHDVNLKSVS.

2 disordered regions span residues 1 to 39 (MVGDYRGRFSSRRFSDDSDDSSDDASSVEGETTSSMYSA) and 151 to 232 (EPEN…VVPL). Low complexity predominate over residues 168–180 (SSGSASSLKQLSS).

The protein localises to the nucleus. Functionally, together with COR28, involved in central circadian clock regulation and in flowering promotion, by binding to the chromatin of clock-associated evening genes TOC1, PRR5, ELF4 and cold-responsive genes in order to repress their transcription. Negative regulator of freezing tolerance. In Arabidopsis thaliana (Mouse-ear cress), this protein is Cold-regulated protein 27.